The chain runs to 665 residues: Coiled-coil domain-containing protein 138 (665 aa).

Phosphothreonine is present on Thr-48. Residue Ser-49 is modified to Phosphoserine. Residues 198-323 (QQKFAEELQK…YEFMTIQRLK (126 aa)) are a coiled coil. Ser-469 is subject to Phosphoserine.

In Macaca fascicularis (Crab-eating macaque), this protein is Coiled-coil domain-containing protein 138 (CCDC138).